The following is a 153-amino-acid chain: MSSVSAAGATPPASPGCIAGIGMDLLRIERIERALARHGDRFAQKILGPKELAKFQARRRRDPARGVRFLATRFAAKEAFSKAIGLGMRMPMSWRRVQTLNAPGGRPVLVIGAELADWFDARFGAAHVSITDESDMAAAYVIVERKPAPDGRP.

The Mg(2+) site is built by D24 and E78.

It belongs to the P-Pant transferase superfamily. AcpS family. Mg(2+) serves as cofactor.

It localises to the cytoplasm. The enzyme catalyses apo-[ACP] + CoA = holo-[ACP] + adenosine 3',5'-bisphosphate + H(+). Its function is as follows. Transfers the 4'-phosphopantetheine moiety from coenzyme A to a Ser of acyl-carrier-protein. In Bordetella pertussis (strain Tohama I / ATCC BAA-589 / NCTC 13251), this protein is Holo-[acyl-carrier-protein] synthase.